Reading from the N-terminus, the 161-residue chain is GTP-dependent dephospho-CoA kinase (161 aa).

GTP is bound by residues D37, I38, D56, K58, E112, and D135.

Belongs to the GTP-dependent DPCK family.

It catalyses the reaction 3'-dephospho-CoA + GTP = GDP + CoA + H(+). Its pathway is cofactor biosynthesis; coenzyme A biosynthesis. Its function is as follows. Catalyzes the GTP-dependent phosphorylation of the 3'-hydroxyl group of dephosphocoenzyme A to form coenzyme A (CoA). This is GTP-dependent dephospho-CoA kinase from Methanococcus aeolicus (strain ATCC BAA-1280 / DSM 17508 / OCM 812 / Nankai-3).